The following is a 101-amino-acid chain: Thioredoxin 1 (101 aa).

The Thioredoxin domain maps to 2 to 101 (AQTLDDLIRT…MRQEVLKAIG (100 aa)). An intrachain disulfide couples Cys25 to Cys28.

The protein belongs to the thioredoxin family.

Functionally, participates in various redox reactions through the reversible oxidation of its active center dithiol to a disulfide and catalyzes dithiol-disulfide exchange reactions. The sequence is that of Thioredoxin 1 (trx1) from Chlorobaculum tepidum (strain ATCC 49652 / DSM 12025 / NBRC 103806 / TLS) (Chlorobium tepidum).